Here is a 271-residue protein sequence, read N- to C-terminus: Short-chain type dehydrogenase/reductase (271 aa).

Position 25 to 49 (25 to 49 (IVTGASRGIGREIALNMAEKGAKVV)) interacts with NAD(+). Substrate is bound at residue Ser166. Tyr179 (proton acceptor) is an active-site residue.

Belongs to the short-chain dehydrogenases/reductases (SDR) family.

The sequence is that of Short-chain type dehydrogenase/reductase from Picea abies (Norway spruce).